The sequence spans 755 residues: Polyribonucleotide nucleotidyltransferase (755 aa).

The Mg(2+) site is built by aspartate 482 and aspartate 488. The 60-residue stretch at 549-608 (PRMVSFYIDKDKISAAIGAKGKNIRSVCERSNAKIEIGDDGKVSVFAMSSAEAEIAKNMM) folds into the KH domain. Residues 618–686 (GAIVDVKVVK…KGGCPKLSRR (69 aa)) form the S1 motif domain. Positions 702–714 (NEEKKDSSNDRDY) are enriched in basic and acidic residues. Residues 702 to 755 (NEEKKDSSNDRDYYNSPFNRKSGHRKRPVHSRSSFSNRNNRPKFGNDDSSSSFY) are disordered. The span at 722–731 (KSGHRKRPVH) shows a compositional bias: basic residues.

The protein belongs to the polyribonucleotide nucleotidyltransferase family. Requires Mg(2+) as cofactor.

Its subcellular location is the cytoplasm. It catalyses the reaction RNA(n+1) + phosphate = RNA(n) + a ribonucleoside 5'-diphosphate. Involved in mRNA degradation. Catalyzes the phosphorolysis of single-stranded polyribonucleotides processively in the 3'- to 5'-direction. The chain is Polyribonucleotide nucleotidyltransferase from Wolbachia sp. subsp. Brugia malayi (strain TRS).